The chain runs to 406 residues: 26S proteasome regulatory subunit 8 (406 aa).

A2 is modified (N-acetylalanine). A Phosphoserine modification is found at S120. The may mediate interaction with PRPF9 stretch occupies residues 186–406; that stretch reads VLLYGPPGTG…KNMSIKKLWK (221 aa). An ATP-binding site is contributed by 190 to 197; it reads GPPGTGKT. N6-acetyllysine is present on K222.

It belongs to the AAA ATPase family. In terms of assembly, component of the 19S proteasome regulatory particle complex. The 26S proteasome consists of a 20S core particle (CP) and two 19S regulatory subunits (RP). The regulatory particle is made of a lid composed of 9 subunits, a base containing 6 ATPases including PSMC5 and few additional components. Component of a complex with USP49 and RUVBL1. Interacts with PRPF19. Interacts with TRIM5. Interacts with NDC80. Interacts with PAAF1. Interacts, in vitro, with the thyroid hormone receptor (in a thyroid hormone T3-dependent manner) and with retinoid X receptor (RXR). Interacts with ERCC6.

The protein resides in the cytoplasm. Its subcellular location is the nucleus. Component of the 26S proteasome, a multiprotein complex involved in the ATP-dependent degradation of ubiquitinated proteins. This complex plays a key role in the maintenance of protein homeostasis by removing misfolded or damaged proteins, which could impair cellular functions, and by removing proteins whose functions are no longer required. Therefore, the proteasome participates in numerous cellular processes, including cell cycle progression, apoptosis, or DNA damage repair. PSMC5 belongs to the heterohexameric ring of AAA (ATPases associated with diverse cellular activities) proteins that unfolds ubiquitinated target proteins that are concurrently translocated into a proteolytic chamber and degraded into peptides. This Bos taurus (Bovine) protein is 26S proteasome regulatory subunit 8 (PSMC5).